Reading from the N-terminus, the 420-residue chain is 3-isopropylmalate dehydratase large subunit (420 aa).

[4Fe-4S] cluster is bound by residues cysteine 300, cysteine 360, and cysteine 363.

It belongs to the aconitase/IPM isomerase family. LeuC type 2 subfamily. Heterodimer of LeuC and LeuD. Requires [4Fe-4S] cluster as cofactor.

It carries out the reaction (2R,3S)-3-isopropylmalate = (2S)-2-isopropylmalate. It functions in the pathway amino-acid biosynthesis; L-leucine biosynthesis; L-leucine from 3-methyl-2-oxobutanoate: step 2/4. Catalyzes the isomerization between 2-isopropylmalate and 3-isopropylmalate, via the formation of 2-isopropylmaleate. This chain is 3-isopropylmalate dehydratase large subunit, found in Halothermothrix orenii (strain H 168 / OCM 544 / DSM 9562).